The sequence spans 118 residues: Large ribosomal subunit protein uL18 (118 aa).

It belongs to the universal ribosomal protein uL18 family. Part of the 50S ribosomal subunit; part of the 5S rRNA/L5/L18/L25 subcomplex. Contacts the 5S and 23S rRNAs.

Functionally, this is one of the proteins that bind and probably mediate the attachment of the 5S RNA into the large ribosomal subunit, where it forms part of the central protuberance. This chain is Large ribosomal subunit protein uL18, found in Campylobacter hominis (strain ATCC BAA-381 / DSM 21671 / CCUG 45161 / LMG 19568 / NCTC 13146 / CH001A).